Reading from the N-terminus, the 26-residue chain is Omega-conotoxin CVIC (26 aa).

3 cysteine pairs are disulfide-bonded: Cys1-Cys16, Cys8-Cys20, and Cys15-Cys26. Cys26 is modified (cysteine amide).

It belongs to the conotoxin O1 superfamily. Expressed by the venom duct.

The protein localises to the secreted. Functionally, omega-conotoxins act at presynaptic membranes, they bind and block voltage-gated calcium channels (Cav). This toxin blocks N-, P- and Q-type calcium channels. The chain is Omega-conotoxin CVIC from Conus catus (Cat cone).